We begin with the raw amino-acid sequence, 587 residues long: MSNKRTSVEQLISCPICSRKVFFSLINSHLDICGKEKSKPSSRPQTVSSLLAGPKKRKQANSEKFIDLENKDHEIKPGLKSESDDIEIVENESKRFKAAPSTDFAKSIVEPASSRDQLHNDYESRWLQKISHLPLSEKLRPKELRDYVGQQHILSQDNGTLFKYIKQGTIPSMILWGPPGVGKTSLARLLTKTATTSSNESNVGSRYFMIETSATKANTQELRGIFEKSKKEYQLTKRRTVLFIDEIHRFNKVQQDLLLPHVENGDIILIGATTENPSFQLNNALISRCLIFVLEKLNVNELCIVLSRGIALLNKCRKQVWNIENPLKLSRSILEYVVDLSVGDTRRALNMLEMIEVSTRERKADEEELSIDDVRDIIKNNSSNGLNTYYDPKGDNHYDTISAFHKSIRGGDENASLYYLARMLQGGEDPLYVARRMIRIASEDIGLRDSSLLPLAVAAHDAVMKVGLPEADLALAQCCVALARAPKSVELYRAWKKLRAMMSENMYSLASSEIPMHIRNAPTKLMEELGYHKGYKYNPDYIEGKVQQDYFPKEVLEKCPNKTDLKFLDGKHLGDKEDPDLRQSYQG.

Residues 11-38 form a UBZ4-type zinc finger; the sequence is LISCPICSRKVFFSLINSHLDICGKEKS. Zn(2+) is bound by residues Cys-14, Cys-17, His-29, and Cys-33. The disordered stretch occupies residues 35–62; that stretch reads KEKSKPSSRPQTVSSLLAGPKKRKQANS. ATP-binding positions include 177–184 and 179–185; these read GPPGVGKT and PGVGKTS.

It belongs to the AAA ATPase family. RarA/MGS1/WRNIP1 subfamily. Mg(2+) serves as cofactor.

Its subcellular location is the nucleus. Functionally, involved in the maintenance of proper DNA topology and chromosome integrity via annealing of single-stranded DNA breaks. Modulates DNA polymerase delta during replication or replication-associated repair. May function as a modulator for SGS1 when DNA is damaged. The protein is DNA-dependent ATPase MGS1 (MGS1) of Saccharomyces cerevisiae (strain ATCC 204508 / S288c) (Baker's yeast).